A 150-amino-acid polypeptide reads, in one-letter code: UPF0178 protein DMR_20710 (150 aa).

It belongs to the UPF0178 family.

The polypeptide is UPF0178 protein DMR_20710 (Solidesulfovibrio magneticus (strain ATCC 700980 / DSM 13731 / RS-1) (Desulfovibrio magneticus)).